A 295-amino-acid chain; its full sequence is Lipase 2 (295 aa).

The N-terminal stretch at 1-31 (MPKPALRRVMTATVAAVGTLALGLTDATAHA) is a signal peptide. Serine 48 functions as the Nucleophile in the catalytic mechanism. Cystine bridges form between cysteine 65/cysteine 89, cysteine 138/cysteine 152, and cysteine 205/cysteine 254. Residue histidine 275 is part of the active site.

The protein belongs to the 'GDSL' lipolytic enzyme family. Monomer.

It is found in the secreted. It carries out the reaction a triacylglycerol + H2O = a diacylglycerol + a fatty acid + H(+). With respect to regulation, strongly inhibited by Ag(+). The cations Ca(2+) and Mg(2+) do not significantly reduce the lipolytic activity of SCO7513, whereas high concentrations of Co(2+) and Cu(2+) partially inhibit it. Is not inhibited by DTT in vitro. Is resistant to PMSF inhibition, except in the presence of Ca(2+). Catalyzes the hydrolysis of fatty acid esters with a preference for long chain fatty acids (C16-C18). The sequence is that of Lipase 2 from Streptomyces coelicolor (strain ATCC BAA-471 / A3(2) / M145).